We begin with the raw amino-acid sequence, 396 residues long: Lipid-A-disaccharide synthase (396 aa).

The protein belongs to the LpxB family.

It carries out the reaction a lipid X + a UDP-2-N,3-O-bis[(3R)-3-hydroxyacyl]-alpha-D-glucosamine = a lipid A disaccharide + UDP + H(+). It participates in bacterial outer membrane biogenesis; LPS lipid A biosynthesis. Condensation of UDP-2,3-diacylglucosamine and 2,3-diacylglucosamine-1-phosphate to form lipid A disaccharide, a precursor of lipid A, a phosphorylated glycolipid that anchors the lipopolysaccharide to the outer membrane of the cell. The chain is Lipid-A-disaccharide synthase from Nitrobacter hamburgensis (strain DSM 10229 / NCIMB 13809 / X14).